A 208-amino-acid polypeptide reads, in one-letter code: TnpB-like protein MJ0012 (208 aa).

Zn(2+)-binding residues include Cys-83, Cys-86, Cys-100, and Cys-103.

Belongs to the transposase 35 family.

The chain is TnpB-like protein MJ0012 from Methanocaldococcus jannaschii (strain ATCC 43067 / DSM 2661 / JAL-1 / JCM 10045 / NBRC 100440) (Methanococcus jannaschii).